A 22-amino-acid polypeptide reads, in one-letter code: thr operon leader peptide (22 aa).

It belongs to the thr operon leader peptide family.

Its function is as follows. This protein is involved in control of the biosynthesis of threonine. The polypeptide is thr operon leader peptide (Yersinia pestis bv. Antiqua (strain Antiqua)).